The following is a 511-amino-acid chain: Protein HESO1 (511 aa).

The disordered stretch occupies residues 378-511; the sequence is ARPQNQQMQQ…GQIWRPRHEQ (134 aa). The segment covering 381-392 has biased composition (low complexity); sequence QNQQMQQNWSQS. A compositionally biased stretch (polar residues) spans 404 to 465; sequence LTQSRPQQNW…TSAGSSQNQG (62 aa).

The protein belongs to the DNA polymerase type-B-like family.

The protein localises to the cytoplasm. Its subcellular location is the P-body. It is found in the nucleus. The catalysed reaction is RNA(n) + UTP = RNA(n)-3'-uridine ribonucleotide + diphosphate. Completely inhibited by 2'-O-methylation on the substrate RNA. In terms of biological role, uridylates small RNAs to trigger their degradation. Catalyzes the uridylation of 5' fragments produced by AGO1-mediated cleavage of miRNA target RNAs. Acts synergistically with URT1 in unmethylated miRNA uridylation, leading to their degradation. URT1 and HESO1 prefer substrates with different 3' end nucleotides and act cooperatively to tail different forms of the same miRNAs. URT1 and HESO1 act sequentially, with URT1 mono-uridylating the miRNAs followed by their further uridylation by HESO1. URT1 and HESO1 are involved in the uridylation and clearance of RISC-generated 5' mRNA fragments. Able to act on AGO1-bound miRNAs and the uridylated species stay associated with AGO1. This chain is Protein HESO1, found in Arabidopsis thaliana (Mouse-ear cress).